Consider the following 320-residue polypeptide: Methylenetetrahydrofolate dehydrogenase [NAD(+)] (320 aa).

Cysteine 152 is an active-site residue. NAD(+) contacts are provided by residues 187–188 and 210–211; these read RS and DI.

The protein belongs to the tetrahydrofolate dehydrogenase/cyclohydrolase family. In terms of assembly, homodimer.

It localises to the cytoplasm. Its subcellular location is the nucleus. It catalyses the reaction (6R)-5,10-methylene-5,6,7,8-tetrahydrofolate + NAD(+) = (6R)-5,10-methenyltetrahydrofolate + NADH. It functions in the pathway one-carbon metabolism; tetrahydrofolate interconversion. In terms of biological role, catalyzes oxidation of cytoplasmic one-carbon units for purine biosynthesis. The sequence is that of Methylenetetrahydrofolate dehydrogenase [NAD(+)] (mtd1) from Schizosaccharomyces pombe (strain 972 / ATCC 24843) (Fission yeast).